A 281-amino-acid chain; its full sequence is 2,3,4,5-tetrahydropyridine-2,6-dicarboxylate N-succinyltransferase (281 aa).

The protein belongs to the transferase hexapeptide repeat family.

It is found in the cytoplasm. The enzyme catalyses (S)-2,3,4,5-tetrahydrodipicolinate + succinyl-CoA + H2O = (S)-2-succinylamino-6-oxoheptanedioate + CoA. It functions in the pathway amino-acid biosynthesis; L-lysine biosynthesis via DAP pathway; LL-2,6-diaminopimelate from (S)-tetrahydrodipicolinate (succinylase route): step 1/3. In Methylobacterium sp. (strain 4-46), this protein is 2,3,4,5-tetrahydropyridine-2,6-dicarboxylate N-succinyltransferase.